Consider the following 156-residue polypeptide: ATP synthase subunit b (156 aa).

The chain crosses the membrane as a helical span at residues 3 to 23; the sequence is INFTLLAQALAFAGLIWIIAT.

The protein belongs to the ATPase B chain family. As to quaternary structure, F-type ATPases have 2 components, F(1) - the catalytic core - and F(0) - the membrane proton channel. F(1) has five subunits: alpha(3), beta(3), gamma(1), delta(1), epsilon(1). F(0) has three main subunits: a(1), b(2) and c(10-14). The alpha and beta chains form an alternating ring which encloses part of the gamma chain. F(1) is attached to F(0) by a central stalk formed by the gamma and epsilon chains, while a peripheral stalk is formed by the delta and b chains.

It is found in the cell inner membrane. Functionally, f(1)F(0) ATP synthase produces ATP from ADP in the presence of a proton or sodium gradient. F-type ATPases consist of two structural domains, F(1) containing the extramembraneous catalytic core and F(0) containing the membrane proton channel, linked together by a central stalk and a peripheral stalk. During catalysis, ATP synthesis in the catalytic domain of F(1) is coupled via a rotary mechanism of the central stalk subunits to proton translocation. Its function is as follows. Component of the F(0) channel, it forms part of the peripheral stalk, linking F(1) to F(0). This Stenotrophomonas maltophilia (strain R551-3) protein is ATP synthase subunit b.